The primary structure comprises 219 residues: Small ribosomal subunit protein uS3c (219 aa).

The region spanning 47 to 119 (VRKYVRTAEN…KFIISLAEVE (73 aa)) is the KH type-2 domain.

The protein belongs to the universal ribosomal protein uS3 family. As to quaternary structure, part of the 30S ribosomal subunit.

The protein resides in the plastid. It is found in the chloroplast. The chain is Small ribosomal subunit protein uS3c (rps3) from Staurastrum punctulatum (Green alga).